The primary structure comprises 224 residues: MSVLVITGTGTEVGKTVVTAAIAALAPGRVAVLKAAQTGVAAGEDGDVAEVARLAGPVTAVELARYPEPLAPATAARRAGAPPVRPAQVAEAARELDREHDLVLVEGAGGLLVRYDDGGTLADVAVALSAPVLVVAHGGLGTLNAAALTAEALRARGVECAGVVVGSWPSAPDLACRCNLDDLPEVTGAPLLGVLPEGAAADPAAFGDIARAGLAPALGGRWSR.

Residue 12 to 17 (EVGKTV) coordinates ATP. Mg(2+) is bound at residue Thr16. Residue Lys34 is part of the active site. Residue Thr38 coordinates substrate. ATP is bound by residues Asp47, 106-109 (EGAG), 166-167 (GS), and 196-198 (PEG). Residues Asp47 and Glu106 each coordinate Mg(2+).

It belongs to the dethiobiotin synthetase family. As to quaternary structure, homodimer. Mg(2+) serves as cofactor.

It is found in the cytoplasm. It catalyses the reaction (7R,8S)-7,8-diammoniononanoate + CO2 + ATP = (4R,5S)-dethiobiotin + ADP + phosphate + 3 H(+). Its pathway is cofactor biosynthesis; biotin biosynthesis; biotin from 7,8-diaminononanoate: step 1/2. In terms of biological role, catalyzes a mechanistically unusual reaction, the ATP-dependent insertion of CO2 between the N7 and N8 nitrogen atoms of 7,8-diaminopelargonic acid (DAPA, also called 7,8-diammoniononanoate) to form a ureido ring. The sequence is that of ATP-dependent dethiobiotin synthetase BioD from Saccharopolyspora erythraea (strain ATCC 11635 / DSM 40517 / JCM 4748 / NBRC 13426 / NCIMB 8594 / NRRL 2338).